A 785-amino-acid polypeptide reads, in one-letter code: E3 UFM1-protein ligase 1 homolog (785 aa).

The interval 405–483 is disordered; sequence ASFQDQDDDG…GGGGGNKKTV (79 aa).

Belongs to the UFL1 family.

E3 UFM1-protein ligase that mediates ufmylation of target proteins. The polypeptide is E3 UFM1-protein ligase 1 homolog (Drosophila pseudoobscura pseudoobscura (Fruit fly)).